A 318-amino-acid polypeptide reads, in one-letter code: Transaldolase (318 aa).

Catalysis depends on Lys132, which acts as the Schiff-base intermediate with substrate.

It belongs to the transaldolase family. Type 1 subfamily. In terms of assembly, homodimer.

It localises to the cytoplasm. The enzyme catalyses D-sedoheptulose 7-phosphate + D-glyceraldehyde 3-phosphate = D-erythrose 4-phosphate + beta-D-fructose 6-phosphate. It functions in the pathway carbohydrate degradation; pentose phosphate pathway; D-glyceraldehyde 3-phosphate and beta-D-fructose 6-phosphate from D-ribose 5-phosphate and D-xylulose 5-phosphate (non-oxidative stage): step 2/3. In terms of biological role, transaldolase is important for the balance of metabolites in the pentose-phosphate pathway. The chain is Transaldolase from Shewanella sp. (strain MR-7).